Consider the following 1914-residue polypeptide: Zinc finger protein Rlf (1914 aa).

Ser-41 carries the post-translational modification Phosphoserine. A compositionally biased stretch (basic and acidic residues) spans 521 to 540 (KQYRRRDLTDQHKEKRDKKP). The segment at 521-541 (KQYRRRDLTDQHKEKRDKKPI) is disordered. The segment at 582–604 (YTCPVCIKKFKRKEMFVPHVMEH) adopts a C2H2-type 1 zinc-finger fold. Lys-622 participates in a covalent cross-link: Glycyl lysine isopeptide (Lys-Gly) (interchain with G-Cter in SUMO2). 2 positions are modified to phosphoserine: Ser-632 and Ser-634. C2H2-type zinc fingers lie at residues 671-696 (YPCPGTDCSRVFKQFKYLSVHLKAEH), 714-736 (EKCTYCRRHFMSAFHLREHEQVH), 742-766 (YMCVSIDCYARFGSVNELLNHKQKH), 771-795 (YKCELNGCNIVFSDLGQLYHHEAQH), and 801-825 (YTCNFLGCKKFYYSKIEYQNHLSMH). Residue Lys-839 forms a Glycyl lysine isopeptide (Lys-Gly) (interchain with G-Cter in SUMO2) linkage. A disordered region spans residues 882-907 (TETAENLKENSDSNSSDQLSHSSSAS). The segment covering 893 to 907 (DSNSSDQLSHSSSAS) has biased composition (low complexity). Residues 954–979 (FTCGFDGCGSTYKNARGMQKHLRKVH) form a C2H2-type 7 zinc finger. A disordered region spans residues 993-1028 (LFPSLGNEHNQTTEKLDAEPKPCSDTNSDSPDEGLD). Residues 1003 to 1014 (QTTEKLDAEPKP) show a composition bias toward basic and acidic residues. C2H2-type zinc fingers lie at residues 1127–1152 (FFCELQGCKYEFVTREALLMHYLKKH) and 1172–1195 (FQCHICQRSFTRKTHLRIHYKNKH). The disordered stretch occupies residues 1231-1290 (LGGDPSSNSEKPHCHPKKDECSSETDLESSCEETESKTSDISSPIGSHREEQEGREGRGS). Residues 1240–1251 (EKPHCHPKKDEC) show a composition bias toward basic and acidic residues. Residues 1252–1263 (SSETDLESSCEE) show a composition bias toward acidic residues. Over residues 1277-1289 (SHREEQEGREGRG) the composition is skewed to basic and acidic residues. C2H2-type zinc fingers lie at residues 1310 to 1335 (FHCIHKTCNSSFTNLKGLIRHYRTVH), 1362 to 1387 (FACKYKECNKRFLCSKALAKHCSDSH), 1407 to 1432 (FSCNQPQCPAVFYTFNKLKHHLMEQH), 1444 to 1469 (IHCDLNGCGQIFTHRSNYSQHVYYRH), and 1549 to 1574 (YPCMVQGCLSVVKLESSIVRHYKRTH). A Glycyl lysine isopeptide (Lys-Gly) (interchain with G-Cter in SUMO2) cross-link involves residue Lys-1423. Residues Lys-1599 and Lys-1611 each participate in a glycyl lysine isopeptide (Lys-Gly) (interchain with G-Cter in SUMO2) cross-link. A disordered region spans residues 1620 to 1654 (SERTEHSHSPGDSSAPIQNTDCCHSSERDGGQKGC). Over residues 1629-1642 (PGDSSAPIQNTDCC) the composition is skewed to polar residues. Lys-1696 participates in a covalent cross-link: Glycyl lysine isopeptide (Lys-Gly) (interchain with G-Cter in SUMO2). Positions 1725-1757 (ESETRQHSSGQENTVKNPTHVPKENFRKHSQPR) are disordered. The span at 1731–1741 (HSSGQENTVKN) shows a compositional bias: polar residues. Residue Lys-1762 forms a Glycyl lysine isopeptide (Lys-Gly) (interchain with G-Cter in SUMO2) linkage. The interval 1783-1807 (KEDDFDDWEPSEHLTLSNSSQSSND) is disordered. The segment covering 1796–1807 (LTLSNSSQSSND) has biased composition (polar residues).

The protein belongs to the krueppel C2H2-type zinc-finger protein family. In terms of assembly, interacts with RIT1 and RIT2. In terms of tissue distribution, widely expressed in fetal and adult tissues.

The protein localises to the nucleus. Its function is as follows. May be involved in transcriptional regulation. The chain is Zinc finger protein Rlf (RLF) from Homo sapiens (Human).